Here is a 779-residue protein sequence, read N- to C-terminus: MSKTQKTTVKAKKAKRIPVIELVEAISSKNLKRLLSAEGLDEVTRIQLSLYYRKIFKTTSNPLNNDEVGFIKVKYFHSDKLEDTGRVYAEKGRSLQSFKKAIRAFINNGINLDIDMKNSHPTLITQYCKKNKILCPFLDDYVRRREKRLEDVMVFHKISRDQAKELILRLCYLGSYKIPNDDGTSYKPKKTLEFLEKFKEEAEIIADRIAKKEKELYAKIKDNDDCKNKKAVILSVLAQQLEHSCLMEMYNFFTSKKIRVSTLCFDGMLINGINGNISDLLRECENFVYEQINYKINLEEKPMEHKLKFEVPIFSDYVDSDSDCQIKLFELVGKNKFKFCNGVLWVFDDQTGMFENSNHVVFRYLKRYKEYFNFIISTDDDGNHKTKNYATDEVLRKKIIGFIKDECQDNEWMLKTQTSSLGYLLFKDGIYNFNTSTFTEGFDPNIVFKFRVPWKFPKYDKELIKKAYKLSFGALFDNPKPFITSLACALAGEIKLKKIYFCPGKSNAGKSYLIKMLQYCFGDYIGTINGENISYNSKDSRDEAAKYRWAYLLANTRIVMSSEISMKKSIDGNMIKKFASAGDKIVGRKHCESEISFTPNFTIFCMFNDIPEIEPHDEAVSNRLVYHEFPYVFVKEEELNEKPYNKLKDEDLDSKYQTKDFASGFIHILLDAYKNYLENGLPEFDNEVKEKWTAQTKQIDKVTSIINEYYEVTNNVKDFVPLNEILKFKEQHKDLKTISKNRFNEILVEELKLKEGRSAKLRYWSGLKKRHFGDDINFE.

One can recognise an SF3 helicase domain in the interval 477-642 (DNPKPFITSL…FVKEEELNEK (166 aa)). 504–511 (GKSNAGKS) is an ATP binding site.

In Acanthamoeba polyphaga (Amoeba), this protein is Putative helicase V13.